The chain runs to 443 residues: Xaa-Pro dipeptidase (443 aa).

5 residues coordinate Mn(2+): aspartate 246, aspartate 257, histidine 339, glutamate 384, and glutamate 423.

This sequence belongs to the peptidase M24B family. Bacterial-type prolidase subfamily. Mn(2+) is required as a cofactor.

The enzyme catalyses Xaa-L-Pro dipeptide + H2O = an L-alpha-amino acid + L-proline. Functionally, splits dipeptides with a prolyl residue in the C-terminal position. The chain is Xaa-Pro dipeptidase from Salmonella choleraesuis (strain SC-B67).